A 78-amino-acid chain; its full sequence is Neurogranin (78 aa).

M1 carries the N-acetylmethionine modification. Cysteines 3 and 51 form a disulfide. In terms of domain architecture, IQ spans 26–47; the sequence is ANAAAAKIQASFRGHMARKKIK. S36 carries the post-translational modification Phosphoserine; by PHK and PKC. The interval 39–78 is disordered; the sequence is GHMARKKIKSGECGRKGPGPGGPGGAGGARGGAGGGPSGD. The 31-residue stretch at 48–78 folds into the Collagen-like domain; it reads SGECGRKGPGPGGPGGAGGARGGAGGGPSGD. Residues 54–78 are compositionally biased toward gly residues; it reads KGPGPGGPGGAGGARGGAGGGPSGD. Position 68 is a citrulline; partial (R68). R68 carries the omega-N-methylarginine modification.

Belongs to the neurogranin family. Interacts with apo-calmodulin; this interaction decreases the affinity of calmodulin for calcium ions. Disulfide bond formation is redox-sensitive. The cysteine residues are readily oxidized by several nitric acid (NO) donors and other oxidants to form intramolecular disulfide. Cys-51 can form a disulfide with any other of the cysteine residues with an order of reactivity Cys-9 &gt; Cys-4 &gt; Cys-3. Post-translationally, phosphorylated at Ser-36 by PHK and PKC, phosphorylation prevents interaction with Calmodulin and interrupts several learning- and memory-associated functions.

It is found in the cytoplasm. The protein resides in the synapse. The protein localises to the cell projection. Its subcellular location is the dendritic spine. Functionally, regulates the affinity of calmodulin for calcium. Involved in synaptic plasticity and spatial learning. The protein is Neurogranin (Nrgn) of Mus musculus (Mouse).